A 140-amino-acid chain; its full sequence is Large ribosomal subunit protein uL11 (140 aa).

Belongs to the universal ribosomal protein uL11 family. As to quaternary structure, part of the ribosomal stalk of the 50S ribosomal subunit. Interacts with L10 and the large rRNA to form the base of the stalk. L10 forms an elongated spine to which L12 dimers bind in a sequential fashion forming a multimeric L10(L12)X complex. In terms of processing, one or more lysine residues are methylated.

Its function is as follows. Forms part of the ribosomal stalk which helps the ribosome interact with GTP-bound translation factors. This is Large ribosomal subunit protein uL11 from Desulforapulum autotrophicum (strain ATCC 43914 / DSM 3382 / VKM B-1955 / HRM2) (Desulfobacterium autotrophicum).